The primary structure comprises 126 residues: Plastocyanin (126 aa).

The signal sequence occupies residues 1–28; the sequence is MSKKFLTILAGLLLVVSSFFLSVSPAAA. Positions 29–126 constitute a Plastocyanin-like domain; it reads ANATVKMGSD…AGMVGKVVVE (98 aa). Cu cation contacts are provided by His67, Cys111, His114, and Met119.

The protein belongs to the plastocyanin family. Cu(2+) serves as cofactor.

The protein resides in the cellular thylakoid membrane. Participates in electron transfer between P700 and the cytochrome b6-f complex in photosystem I. The chain is Plastocyanin (petE) from Synechocystis sp. (strain ATCC 27184 / PCC 6803 / Kazusa).